The primary structure comprises 393 residues: Phosphoglycerate kinase (393 aa).

Substrate is bound by residues 22–24, Arg-37, 60–63, Arg-119, and Arg-152; these read DFN and HLGR. ATP contacts are provided by residues Lys-202, Gly-293, Glu-324, and 350–353; that span reads GGDS.

The protein belongs to the phosphoglycerate kinase family. Monomer.

The protein localises to the cytoplasm. The enzyme catalyses (2R)-3-phosphoglycerate + ATP = (2R)-3-phospho-glyceroyl phosphate + ADP. The protein operates within carbohydrate degradation; glycolysis; pyruvate from D-glyceraldehyde 3-phosphate: step 2/5. This chain is Phosphoglycerate kinase (pgk), found in Borreliella burgdorferi (strain ATCC 35210 / DSM 4680 / CIP 102532 / B31) (Borrelia burgdorferi).